Here is a 202-residue protein sequence, read N- to C-terminus: Small ribosomal subunit protein uS5 (202 aa).

The span at 1–13 shows a compositional bias: gly residues; that stretch reads MPGQQRRGGGSGG. Positions 1–31 are disordered; it reads MPGQQRRGGGSGGSDRRERRDRSGGGPAQEK. Residues 14 to 23 are compositionally biased toward basic and acidic residues; the sequence is SDRRERRDRS. In terms of domain architecture, S5 DRBM spans 34–97; the sequence is YVERVVAINR…EEAKKHFFKV (64 aa).

This sequence belongs to the universal ribosomal protein uS5 family. Part of the 30S ribosomal subunit. Contacts proteins S4 and S8.

Functionally, with S4 and S12 plays an important role in translational accuracy. Its function is as follows. Located at the back of the 30S subunit body where it stabilizes the conformation of the head with respect to the body. The chain is Small ribosomal subunit protein uS5 from Parafrankia sp. (strain EAN1pec).